We begin with the raw amino-acid sequence, 276 residues long: 4-hydroxy-3-methylbut-2-enyl diphosphate reductase (276 aa).

[4Fe-4S] cluster is bound at residue Cys12. Residues His36 and His70 each contribute to the (2E)-4-hydroxy-3-methylbut-2-enyl diphosphate site. His36 and His70 together coordinate dimethylallyl diphosphate. Isopentenyl diphosphate contacts are provided by His36 and His70. Cys92 contacts [4Fe-4S] cluster. His120 is a (2E)-4-hydroxy-3-methylbut-2-enyl diphosphate binding site. His120 serves as a coordination point for dimethylallyl diphosphate. His120 is a binding site for isopentenyl diphosphate. Glu122 acts as the Proton donor in catalysis. Thr158 serves as a coordination point for (2E)-4-hydroxy-3-methylbut-2-enyl diphosphate. Cys186 provides a ligand contact to [4Fe-4S] cluster. 4 residues coordinate (2E)-4-hydroxy-3-methylbut-2-enyl diphosphate: Ser214, Ser215, Asn216, and Ser258. Ser214, Ser215, Asn216, and Ser258 together coordinate dimethylallyl diphosphate. Isopentenyl diphosphate is bound by residues Ser214, Ser215, Asn216, and Ser258.

Belongs to the IspH family. [4Fe-4S] cluster serves as cofactor.

It carries out the reaction isopentenyl diphosphate + 2 oxidized [2Fe-2S]-[ferredoxin] + H2O = (2E)-4-hydroxy-3-methylbut-2-enyl diphosphate + 2 reduced [2Fe-2S]-[ferredoxin] + 2 H(+). The catalysed reaction is dimethylallyl diphosphate + 2 oxidized [2Fe-2S]-[ferredoxin] + H2O = (2E)-4-hydroxy-3-methylbut-2-enyl diphosphate + 2 reduced [2Fe-2S]-[ferredoxin] + 2 H(+). It participates in isoprenoid biosynthesis; dimethylallyl diphosphate biosynthesis; dimethylallyl diphosphate from (2E)-4-hydroxy-3-methylbutenyl diphosphate: step 1/1. Its pathway is isoprenoid biosynthesis; isopentenyl diphosphate biosynthesis via DXP pathway; isopentenyl diphosphate from 1-deoxy-D-xylulose 5-phosphate: step 6/6. Its function is as follows. Catalyzes the conversion of 1-hydroxy-2-methyl-2-(E)-butenyl 4-diphosphate (HMBPP) into a mixture of isopentenyl diphosphate (IPP) and dimethylallyl diphosphate (DMAPP). Acts in the terminal step of the DOXP/MEP pathway for isoprenoid precursor biosynthesis. The polypeptide is 4-hydroxy-3-methylbut-2-enyl diphosphate reductase (Wolinella succinogenes (strain ATCC 29543 / DSM 1740 / CCUG 13145 / JCM 31913 / LMG 7466 / NCTC 11488 / FDC 602W) (Vibrio succinogenes)).